We begin with the raw amino-acid sequence, 122 residues long: Large ribosomal subunit protein uL14 (122 aa).

It belongs to the universal ribosomal protein uL14 family. As to quaternary structure, part of the 50S ribosomal subunit. Forms a cluster with proteins L3 and L19. In the 70S ribosome, L14 and L19 interact and together make contacts with the 16S rRNA in bridges B5 and B8.

Functionally, binds to 23S rRNA. Forms part of two intersubunit bridges in the 70S ribosome. The protein is Large ribosomal subunit protein uL14 of Chloroflexus aggregans (strain MD-66 / DSM 9485).